The chain runs to 462 residues: Glycine--tRNA ligase (462 aa).

Positions 100 and 174 each coordinate substrate. ATP is bound by residues 206–208, 216–221, 290–291, and 334–337; these read RNE, FRTREF, EL, and GVDR. A substrate-binding site is contributed by 221-225; it reads FEQME. Substrate is bound at residue 330-334; the sequence is EPSVG.

This sequence belongs to the class-II aminoacyl-tRNA synthetase family. As to quaternary structure, homodimer.

It is found in the cytoplasm. It catalyses the reaction tRNA(Gly) + glycine + ATP = glycyl-tRNA(Gly) + AMP + diphosphate. Its function is as follows. Catalyzes the attachment of glycine to tRNA(Gly). In Alkaliphilus oremlandii (strain OhILAs) (Clostridium oremlandii (strain OhILAs)), this protein is Glycine--tRNA ligase.